The following is a 238-amino-acid chain: Protein LicA homolog (238 aa).

Belongs to the peptidase S49 family.

The protein is Protein LicA homolog (licA) of Mycoplasma capricolum subsp. capricolum (strain California kid / ATCC 27343 / NCTC 10154).